A 506-amino-acid polypeptide reads, in one-letter code: Sodium-coupled neutral amino acid symporter 2 (506 aa).

The interval 1 to 23 is disordered; sequence MKKAEMGRFNISPDEDSSSYSSN. Topologically, residues 1–76 are cytoplasmic; that stretch reads MKKAEMGRFN…HPGTTSFGMS (76 aa). Positions 1–96 are regulates protein turnover upon amino acid deprivation; the sequence is MKKAEMGRFN…SGILGLSYAM (96 aa). Phosphoserine is present on residues serine 12, serine 21, serine 22, and serine 55. Residues 77 to 96 traverse the membrane as a helical segment; sequence VFNLSNAIVGSGILGLSYAM. Asparagine 82 lines the Na(+) pocket. The Extracellular portion of the chain corresponds to 97-102; the sequence is ANTGIA. Residues 103-123 traverse the membrane as a helical segment; sequence LFIILLTFVSIFSLYSVHLLL. The Cytoplasmic segment spans residues 124–158; sequence KTANEGGSLLYEQLGHKAFGMVGKLTASGSITMQN. Residues 159–177 form a helical membrane-spanning segment; the sequence is IGAMSSYLFIVKYELPLVI. Residues 178 to 188 are Extracellular-facing; that stretch reads QALMNIEDTNG. Residues 189-209 form a helical membrane-spanning segment; that stretch reads LWYLNGDYLVLLVSLVLILPL. Over 210–217 the chain is Cytoplasmic; that stretch reads SLLRNLGY. The helical transmembrane segment at 218 to 238 threads the bilayer; sequence LGYTSGLSLLCMMFFLIVVIF. The Extracellular portion of the chain corresponds to 239–292; that stretch reads KKFQISCPAEIAFLVNETVNSSLTQPATFLPDMGFNRTESDSCQPRYFIFNSQT. An intrachain disulfide couples cysteine 245 to cysteine 281. N-linked (GlcNAc...) asparagine glycosylation is found at asparagine 258 and asparagine 274. A helical transmembrane segment spans residues 293-313; sequence VYAVPILTFSFVCHPAILPIY. The Cytoplasmic segment spans residues 314-329; the sequence is EELKGRSRRRMMNVSK. Residues 330-350 form a helical membrane-spanning segment; it reads ISFFAMFLMYLLAALFGYLTF. Over 351–371 the chain is Extracellular; sequence YGHVESELLHTYSSVMETDIL. A helical membrane pass occupies residues 372 to 392; it reads LLIVRLAVLVAVTLTVPVVIF. Na(+) is bound at residue threonine 386. Over 393–413 the chain is Cytoplasmic; sequence PIRSSITHLLCASKEFSWWRH. The chain crosses the membrane as a helical span at residues 414–434; it reads SVITVSILVFTNLLVIFVPNI. The Extracellular segment spans residues 435–436; that stretch reads RD. Residues 437–457 traverse the membrane as a helical segment; sequence IFGFIGASAAAMLIFILPSAF. At 458 to 472 the chain is on the cytoplasmic side; sequence YIKLVKKEPMKSVQK. The chain crosses the membrane as a helical span at residues 473–495; the sequence is IGAMFFLLSGIVVMTGSMALIVL. The Extracellular segment spans residues 496 to 506; that stretch reads DWVHNAPGGGH.

The protein belongs to the amino acid/polyamine transporter 2 family. Polyubiquitination by NEDD4L regulates the degradation and the activity of SLC38A2.

The protein resides in the cell membrane. The catalysed reaction is L-alanine(in) + Na(+)(in) = L-alanine(out) + Na(+)(out). It carries out the reaction glycine(in) + Na(+)(in) = glycine(out) + Na(+)(out). The enzyme catalyses L-serine(in) + Na(+)(in) = L-serine(out) + Na(+)(out). It catalyses the reaction L-proline(in) + Na(+)(in) = L-proline(out) + Na(+)(out). The catalysed reaction is L-methionine(in) + Na(+)(in) = L-methionine(out) + Na(+)(out). It carries out the reaction L-histidine(in) + Na(+)(in) = L-histidine(out) + Na(+)(out). The enzyme catalyses L-asparagine(in) + Na(+)(in) = L-asparagine(out) + Na(+)(out). It catalyses the reaction L-glutamine(in) + Na(+)(in) = L-glutamine(out) + Na(+)(out). The catalysed reaction is L-threonine(in) + Na(+)(in) = L-threonine(out) + Na(+)(out). It carries out the reaction L-leucine(in) + Na(+)(in) = L-leucine(out) + Na(+)(out). The enzyme catalyses L-phenylalanine(in) + Na(+)(in) = L-phenylalanine(out) + Na(+)(out). With respect to regulation, inhibited by N-methyl-D-glucamine. Inhibited by choline. Allosteric regulation of sodium ions binding by pH. Symporter that cotransports neutral amino acids and sodium ions from the extracellular to the intracellular side of the cell membrane. The transport is pH-sensitive, Li(+)-intolerant, electrogenic, driven by the Na(+) electrochemical gradient and cotransports of neutral amino acids and sodium ions with a stoichiometry of 1:1. May function in the transport of amino acids at the blood-brain barrier. May function in the transport of amino acids in the supply of maternal nutrients to the fetus through the placenta. Maintains a key metabolic glutamine/glutamate balance underpinning retrograde signaling by dendritic release of the neurotransmitter glutamate. Transports L-proline in differentiating osteoblasts for the efficient synthesis of proline-enriched proteins and provides proline essential for osteoblast differentiation and bone formation during bone development. This is Sodium-coupled neutral amino acid symporter 2 from Bos taurus (Bovine).